Here is a 1597-residue protein sequence, read N- to C-terminus: THO complex subunit 2 (1597 aa).

Disordered regions lie at residues 1250–1274 and 1384–1597; these read KSQRLQNDPPKSVASGSAGLNSKDR and EPYP…RYQR. Polar residues predominate over residues 1419 to 1430; that stretch reads GSSNYRGPSNDR. 4 stretches are compositionally biased toward basic and acidic residues: residues 1458–1490, 1500–1512, 1522–1545, and 1554–1567; these read TYNDRSRALRPTGPDRGDGFDQRDNRLREEYKK, FPEKPFQEGKDSS, YKRDSPSENEEKPNKRFKKDETIR, and RNTRDSGAAHRANE. Polar residues predominate over residues 1568–1582; the sequence is NQRYNGNRKSNTQAL.

This sequence belongs to the THOC2 family. Component of the THO complex, which is composed of HPR1, MFT1, THO2 and THP2. Together with SUB2, TEX1 and YRA1, THO forms the transcription/export (TREX) complex. THO associates with DNA and RNA in vitro.

The protein localises to the nucleus. Component the THO subcomplex of the TREX complex, which operates in coupling transcription elongation to mRNA export. The THO complex is recruited to transcribed genes and moves along the gene with the elongating polymerase during transcription. THO is important for stabilizing nascent RNA in the RNA polymerase II elongation complex by preventing formation of DNA:RNA hybrids behind the elongating polymerase. It functions in cotranscriptional formation of an export-competent messenger ribonucleoprotein particle (mRNP) by facilitating the loading of ATP-dependent RNA helicase SUB2 and the mRNA export factor YRA1 along the nascent mRNA. The polypeptide is THO complex subunit 2 (THO2) (Saccharomyces cerevisiae (strain ATCC 204508 / S288c) (Baker's yeast)).